The sequence spans 266 residues: MKIGKFVIEGNAAIMGILNVTPDSFSDGGSYTTVQKALDHVEQMIADGAKIIDVGGESTRPGCQFVSATDEIDRVVPVIKAIKENYDILISIDTYKTETARAALEAGADILNDVWAGLYDGQMFALAAEYDAPIILMHNQDEEVYQEVTQDVCDFLGNRAQAALDAGVPKNNIWVDPGFGFAKSVQQNTELLKGLDRVCQLGYPVLFGISRKRVVDALLGGNTKAKERDGATAALSAYALGKGCQIVRVHDVKANQDIVAVLSQLM.

The Pterin-binding domain occupies 12–260 (AAIMGILNVT…DVKANQDIVA (249 aa)). Asn19 serves as a coordination point for Mg(2+). Residues Thr59, Asp93, Asn112, Asp176, Lys212, and 248–250 (RVH) each bind (7,8-dihydropterin-6-yl)methyl diphosphate.

The protein belongs to the DHPS family. Homodimer or homotrimer. It depends on Mg(2+) as a cofactor.

The enzyme catalyses (7,8-dihydropterin-6-yl)methyl diphosphate + 4-aminobenzoate = 7,8-dihydropteroate + diphosphate. It participates in cofactor biosynthesis; tetrahydrofolate biosynthesis; 7,8-dihydrofolate from 2-amino-4-hydroxy-6-hydroxymethyl-7,8-dihydropteridine diphosphate and 4-aminobenzoate: step 1/2. In terms of biological role, catalyzes the condensation of para-aminobenzoate (pABA) with 6-hydroxymethyl-7,8-dihydropterin diphosphate (DHPt-PP) to form 7,8-dihydropteroate (H2Pte), the immediate precursor of folate derivatives. The chain is Dihydropteroate synthase (folP) from Streptococcus pyogenes serotype M1.